Here is a 413-residue protein sequence, read N- to C-terminus: Enolase (413 aa).

Position 170 (Q170) interacts with (2R)-2-phosphoglycerate. E212 serves as the catalytic Proton donor. Residues D245, E286, and D313 each coordinate Mg(2+). 4 residues coordinate (2R)-2-phosphoglycerate: K338, R367, S368, and K389. K338 serves as the catalytic Proton acceptor.

This sequence belongs to the enolase family. Requires Mg(2+) as cofactor.

Its subcellular location is the cytoplasm. The protein resides in the secreted. It localises to the cell surface. The enzyme catalyses (2R)-2-phosphoglycerate = phosphoenolpyruvate + H2O. The protein operates within carbohydrate degradation; glycolysis; pyruvate from D-glyceraldehyde 3-phosphate: step 4/5. In terms of biological role, catalyzes the reversible conversion of 2-phosphoglycerate (2-PG) into phosphoenolpyruvate (PEP). It is essential for the degradation of carbohydrates via glycolysis. The chain is Enolase from Neorickettsia sennetsu (strain ATCC VR-367 / Miyayama) (Ehrlichia sennetsu).